The chain runs to 620 residues: LysM domain receptor-like kinase 3 (620 aa).

An N-terminal signal peptide occupies residues 1 to 23; it reads MNLKNGLLLFILFLDCVFFKVES. Residues 24–231 are Extracellular-facing; sequence KCVKGCDVAL…YSRTGIAKGS (208 aa). Disulfide bonds link cysteine 25–cysteine 92, cysteine 29–cysteine 154, and cysteine 90–cysteine 152. The N-linked (GlcNAc...) asparagine glycan is linked to asparagine 46. In terms of domain architecture, LysM 1; degenerate spans 46–72; it reads NISNFMQSKIVLTNSFDVIMSYNRDVV. 2 consecutive LysM domains span residues 102–148 and 167–210; these read FEYT…KINV and VTYP…VFIP. Residues 108 to 114 and 136 to 142 each bind chitin; these read EGDDYDL and DPNHIPV. 2 N-linked (GlcNAc...) asparagine glycosylation sites follow: asparagine 147 and asparagine 199. The chain crosses the membrane as a helical span at residues 232–252; it reads AVGIAMAGIFGLLLFVIYIYA. Residues 253–620 lie on the Cytoplasmic side of the membrane; the sequence is KYFQKKEEEK…QSLINLLSTR (368 aa). Residues 265 to 278 show a composition bias toward polar residues; sequence LPQTSRAFSTQDAS. Residues 265-292 are disordered; that stretch reads LPQTSRAFSTQDASGSAEYETSGSSGHA. Serine 269 and serine 273 each carry phosphoserine. The region spanning 322–595 is the Protein kinase domain; the sequence is FSLDNKIGQG…RSIVVALMTL (274 aa). ATP-binding positions include 328-336 and lysine 349; that span reads IGQGGFGAV. The active-site Proton acceptor is aspartate 441.

This sequence belongs to the protein kinase superfamily. Ser/Thr protein kinase family. In terms of assembly, forms homodimers and homooligomers. Forms heteromeric complexes with NFP at the cell periphery in nodules. Interacts with PUB1. Autophosphorylated. In terms of tissue distribution, expressed in the epidermal and root hair cells of the developing root hair zone during nonsymbiotic growth. Accumulates in roots and nodules during symbiotic growth with rhizobia. Localized at the cell periphery in a narrow zone of about two cell layers (e.g. L1/L2 zone) at the nodule apex upon infection by rhizobia, from the meristem to the infection zone (at protein level).

It is found in the cell membrane. Its subcellular location is the vacuole lumen. The enzyme catalyses L-seryl-[protein] + ATP = O-phospho-L-seryl-[protein] + ADP + H(+). It catalyses the reaction L-threonyl-[protein] + ATP = O-phospho-L-threonyl-[protein] + ADP + H(+). Its function is as follows. Putative receptor for S.meliloti Nod factor signals essential for the establishment of the nitrogen-fixing, root nodule symbiosis with S.meliloti. Involved in the control of root hair curling after S.meliloti infection, probably by modulating the reorganization of the microtubular cytoskeleton in epidermal and cortical cells. Regulates a subset of Nod factor-induced genes. The protein is LysM domain receptor-like kinase 3 of Medicago truncatula (Barrel medic).